The primary structure comprises 160 residues: Oocyte-secreted protein 4B (160 aa).

The N-terminal stretch at 1 to 13 is a signal peptide; sequence MKTSVLLAITAMC.

This sequence belongs to the PLAC1 family.

Its subcellular location is the secreted. The sequence is that of Oocyte-secreted protein 4B from Homo sapiens (Human).